The following is a 69-amino-acid chain: Photosystem I reaction center subunit IV (69 aa).

This sequence belongs to the PsaE family.

The protein localises to the cellular thylakoid membrane. Its function is as follows. Stabilizes the interaction between PsaC and the PSI core, assists the docking of the ferredoxin to PSI and interacts with ferredoxin-NADP oxidoreductase. The protein is Photosystem I reaction center subunit IV of Prochlorococcus marinus (strain MIT 9215).